A 468-amino-acid polypeptide reads, in one-letter code: Alpha-2A adrenergic receptor (468 aa).

At 1-48 (MFRQEQPLAEGSFAPMGSLQPDAGNASWNGTEAPGGGARATPYSLQVT) the chain is on the extracellular side. N-linked (GlcNAc...) asparagine glycosylation is found at asparagine 25 and asparagine 29. The chain crosses the membrane as a helical span at residues 49–74 (LTLVCLAGLLMLFTVFGNVLVIIAVF). The Cytoplasmic segment spans residues 75–85 (TSRALKAPQNL). The helical transmembrane segment at 86–111 (FLVSLASADILVATLVIPFSLANEVM) threads the bilayer. Residues 112–121 (GYWYFGKAWC) are Extracellular-facing. Residues cysteine 121 and cysteine 203 are joined by a disulfide bond. A helical membrane pass occupies residues 122-144 (EIYLALDVLFCTSSIVHLCAISL). At 145–164 (DRYWSITQAIEYNLKRTPRR) the chain is on the cytoplasmic side. The helical transmembrane segment at 165–188 (IKAIIVTVWVISAVISFPPLISFE) threads the bilayer. Residues 189–207 (KKRGRSGQPSAEPRCEIND) are Extracellular-facing. The helical transmembrane segment at 208–232 (QKWYVISSSIGSFFAPCLIMILVYV) threads the bilayer. Over 233-392 (RIYQIAKRRT…RQNREKRFTF (160 aa)) the chain is Cytoplasmic. Disordered regions lie at residues 242-279 (TRVP…VGPV) and 291-381 (NGAP…SRWR). Over residues 315 to 332 (SSEHAERPPGSRRSERGP) the composition is skewed to basic and acidic residues. A Phosphoserine modification is found at serine 348. The span at 351-366 (RRGPGATGLGAPTAGP) shows a compositional bias: low complexity. Position 370 is an omega-N-methylarginine (arginine 370). Residues 393–417 (VLAVVIGVFVVCWFPFFFTYTLTAI) traverse the membrane as a helical segment. Residues 418–427 (GCPVPPTLFK) are Extracellular-facing. Residues 428–448 (FFFWFGYCNSSLNPVIYTIFN) form a helical membrane-spanning segment. The Cytoplasmic segment spans residues 449 to 468 (HDFRRAFKKILCRGDRKRIV). Cysteine 460 carries S-palmitoyl cysteine lipidation.

This sequence belongs to the G-protein coupled receptor 1 family. Adrenergic receptor subfamily. ADRA2A sub-subfamily. In terms of assembly, component of the ADA2A-containing complex (ATAC), composed of KAT14, KAT2A, TADA2L, TADA3L, ZZ3, MBIP, WDR5, YEATS2, CCDC101 and DR1. As to expression, retina, brain and olfactory lobe.

It localises to the cell membrane. Its function is as follows. Alpha-2 adrenergic receptors mediate the catecholamine-induced inhibition of adenylate cyclase through the action of G proteins. Component of the ATAC complex, a complex with histone acetyltransferase activity on histones H3 and H4. In Bos taurus (Bovine), this protein is Alpha-2A adrenergic receptor.